The following is a 688-amino-acid chain: Subtilisin-like protease 1 (688 aa).

A signal peptide spans 1 to 25 (MMLNKKVVALCTLTLHLFCIFLCLG). Residues 26–217 (KEVRSEENGK…IESDKLVSAD (192 aa)) constitute a propeptide, inhibition peptide. Positions 99–129 (EKNKNDNHNNNNNNISSSSSSSSNTFGEEKE) are disordered. Over residues 106–122 (HNNNNNNISSSSSSSSN) the composition is skewed to low complexity. Asn112 carries an N-linked (GlcNAc...) asparagine glycan. Ca(2+)-binding residues include Asn145, Thr148, and Pro150. A glycan (N-linked (GlcNAc...) asparagine) is linked at Asn171. Ca(2+) is bound at residue Gly205. Asn261 carries N-linked (GlcNAc...) asparagine glycosylation. 2 disordered regions span residues 264-284 (HAATSKRKRHSTNERGYDTFS) and 303-332 (NNNNYYYSHSSNGHNSSSRNSSSSRSRPGK). Positions 303 to 328 (NNNNYYYSHSSNGHNSSSRNSSSSRS) are enriched in low complexity. N-linked (GlcNAc...) asparagine glycans are attached at residues Asn317 and Asn322. Residue Asp337 coordinates Ca(2+). One can recognise a Peptidase S8 domain in the interval 343 to 661 (QWGLDLSRLD…AGYADINKAV (319 aa)). 2 disulfides stabilise this stretch: Cys369/Cys479 and Cys458/Cys475. Asp372 acts as the Charge relay system in catalysis. 11 residues coordinate Ca(2+): Asp381, Glu392, Arg396, Phe399, Asp400, Asp401, Asp402, Asn404, Ile406, Asp408, and Asp409. The N-linked (GlcNAc...) asparagine glycan is linked to Asn417. His428 (charge relay system) is an active-site residue. Ca(2+) contacts are provided by Ile439, Asn442, Ile444, and Val446. Residues Asn488, Asn501, and Asn520 are each glycosylated (N-linked (GlcNAc...) asparagine). Residues Cys521 and Cys534 are joined by a disulfide bond. N-linked (GlcNAc...) asparagine glycosylation occurs at Asn603. The active-site Charge relay system is the Ser606. Asn675 is a glycosylation site (N-linked (GlcNAc...) asparagine).

It belongs to the peptidase S8 family. As to quaternary structure, heterodimer between p54 form and prodomain p31; the interaction inhibits p54 catalytic activity. Heterodimer p31-p54 is monomeric at basic pH and dimeric at acidic pH; dimerization is driven by the N-terminal prodomain (p31). The cofactor is Ca(2+). The prodomain (p31) is cleaved, probably by autocatalysis, during the transport to or in the Golgi apparatus, and remains non-covalently associated with the p54 form as an inhibitor. p54 is further cleaved into the p47 form. The p54-to-p47 conversion can be also autocatalytic. This cleavage is likely occurring in the exoneme prior to egress and is mediated by PMX/plasmepsin X. Heterodimer p31-p54 is activated by cleavage of prodomain (p31) by the aspartic protease PMX; cleavage by PMX abolishes inhibitory capacity of p31. Primary autocatalytic processing of SUB1 is essential for parasite growth; the p54-to-p47 conversion is dispensable for SUB1 functions in the parasites. In terms of processing, the disulfide bond between Cys-521 and Cys-534 acts as a redox-sensitive disulfide switch. The oxidized form is required for catalytic activity. Post-translationally, the relevance of the N-glycosylation is not clear. In an insect expression system, SUB1 glycosylation appears to affect its processing into the active mature form suggesting that SUB1 may not be N-glycosylated in parasites.

It localises to the secreted. The protein resides in the parasitophorous vacuole lumen. The enzyme catalyses Hydrolysis of proteins with broad specificity for peptide bonds, and a preference for a large uncharged residue in P1. Hydrolyzes peptide amides.. With respect to regulation, p54 and probably p47 forms are inhibited by the non-covalent interaction with the cleaved propeptide. Inhibited by subtilisin propeptide-like protein SUB1-ProM. Inhibited by small molecule MRT12113. Functionally, serine protease which plays an essential role in merozoite invasion of and egress from host erythrocytes by processing and activating various merozoite surface and parasitophorous vacuole proteins. Mediates the proteolytic maturation of serine proteases SERA4, SERA5 and SERA6 just prior to merozoite egress. Prior to merozoite egress, cleaves merozoite surface proteins MSP1, MSP6 and MSP7, which form the MSP1/6/7 complex, and thereby may prime the parasite cell surface for invasion of fresh erythrocytes. Prior to merozoite egress, cleaves MSRP2 converting it to MSRP2 p25 form, and RAP1 converting it to RAP1 p67 form. This is Subtilisin-like protease 1 from Plasmodium falciparum (isolate 3D7).